A 296-amino-acid polypeptide reads, in one-letter code: Uridine phosphorylase A (296 aa).

Phosphate is bound by residues glycine 46, arginine 77, and 121 to 124 (RLGT). Residues 125 to 126 (SG) and 201 to 203 (QGR) each bind uridine.

Belongs to the PNP/UDP phosphorylase family. As to quaternary structure, homodimer.

The enzyme catalyses uridine + phosphate = alpha-D-ribose 1-phosphate + uracil. The protein operates within pyrimidine metabolism; UMP biosynthesis via salvage pathway; uracil from uridine (phosphorylase route): step 1/1. In terms of biological role, catalyzes the reversible phosphorylytic cleavage of uridine and deoxyuridine to uracil and ribose- or deoxyribose-1-phosphate. The produced molecules are then utilized as carbon and energy sources or in the rescue of pyrimidine bases for nucleotide synthesis. This chain is Uridine phosphorylase A, found in Schistosoma mansoni (Blood fluke).